A 345-amino-acid chain; its full sequence is Phosphoribosylformylglycinamidine cyclo-ligase (345 aa).

Belongs to the AIR synthase family.

The protein resides in the cytoplasm. It carries out the reaction 2-formamido-N(1)-(5-O-phospho-beta-D-ribosyl)acetamidine + ATP = 5-amino-1-(5-phospho-beta-D-ribosyl)imidazole + ADP + phosphate + H(+). It functions in the pathway purine metabolism; IMP biosynthesis via de novo pathway; 5-amino-1-(5-phospho-D-ribosyl)imidazole from N(2)-formyl-N(1)-(5-phospho-D-ribosyl)glycinamide: step 2/2. The polypeptide is Phosphoribosylformylglycinamidine cyclo-ligase (Sodalis glossinidius (strain morsitans)).